A 317-amino-acid polypeptide reads, in one-letter code: MTTQLDALRNMTVVVADTGDIDAIKKYQPQDATTNPSLILSASSLPQYAPLIDEAIAYAKAKSADKTQQLIDAEDKLAVNIGLEILKIVPGRISTEVDARLSYDTQATVEKARKLIALYNEAGISNDRILIKIASTWQGIRAAEILEKEGINCNLTLLFSEAQARACAEAGVYLISPFVGRILDWYKANSDKKEYAPAEDPGVISVTKIYNYYKQYGYNTVVMGASFRNVGEITELAGCDRLTIAPALLKELQENSTALVRKLEFKGEVQAKPQPLTESQFYWQHNSDPMAVEKLADGIRKFAIDQEKLEKMLLEKF.

Lys132 acts as the Schiff-base intermediate with substrate in catalysis.

Belongs to the transaldolase family. Type 1 subfamily. As to quaternary structure, homodimer.

It localises to the cytoplasm. The enzyme catalyses D-sedoheptulose 7-phosphate + D-glyceraldehyde 3-phosphate = D-erythrose 4-phosphate + beta-D-fructose 6-phosphate. Its pathway is carbohydrate degradation; pentose phosphate pathway; D-glyceraldehyde 3-phosphate and beta-D-fructose 6-phosphate from D-ribose 5-phosphate and D-xylulose 5-phosphate (non-oxidative stage): step 2/3. Its function is as follows. Transaldolase is important for the balance of metabolites in the pentose-phosphate pathway. The protein is Transaldolase of Histophilus somni (strain 129Pt) (Haemophilus somnus).